A 385-amino-acid chain; its full sequence is uncharacterized protein (385 aa).

This sequence belongs to the phage portal family. HK97 subfamily.

This is an uncharacterized protein from Rickettsia bellii (strain RML369-C).